The primary structure comprises 306 residues: Putative S-adenosyl-L-methionine-dependent methyltransferase MAV_4442 (306 aa).

S-adenosyl-L-methionine is bound by residues Asp-129 and 158-159 (DL).

Belongs to the UPF0677 family.

In terms of biological role, exhibits S-adenosyl-L-methionine-dependent methyltransferase activity. The polypeptide is Putative S-adenosyl-L-methionine-dependent methyltransferase MAV_4442 (Mycobacterium avium (strain 104)).